A 508-amino-acid chain; its full sequence is Photosystem II CP47 reaction center protein (508 aa).

Transmembrane regions (helical) follow at residues 21–36 (SVHIMHTALVAGWAGS), 101–115 (IAFSGLCFLAAIWHW), 140–156 (GIHLFLSGVACFGFGAF), 203–218 (IAAGTLGILAGLFHLS), 237–252 (VLSSSIAAVFFAAFVV), and 457–472 (SFALLFFFGHIWHGAR).

It belongs to the PsbB/PsbC family. PsbB subfamily. In terms of assembly, PSII is composed of 1 copy each of membrane proteins PsbA, PsbB, PsbC, PsbD, PsbE, PsbF, PsbH, PsbI, PsbJ, PsbK, PsbL, PsbM, PsbT, PsbX, PsbY, PsbZ, Psb30/Ycf12, at least 3 peripheral proteins of the oxygen-evolving complex and a large number of cofactors. It forms dimeric complexes. The cofactor is Binds multiple chlorophylls. PSII binds additional chlorophylls, carotenoids and specific lipids..

The protein resides in the plastid membrane. Functionally, one of the components of the core complex of photosystem II (PSII). It binds chlorophyll and helps catalyze the primary light-induced photochemical processes of PSII. PSII is a light-driven water:plastoquinone oxidoreductase, using light energy to abstract electrons from H(2)O, generating O(2) and a proton gradient subsequently used for ATP formation. This is Photosystem II CP47 reaction center protein from Cuscuta reflexa (Southern Asian dodder).